We begin with the raw amino-acid sequence, 323 residues long: o-succinylbenzoate synthase (323 aa).

Lys134 functions as the Proton donor in the catalytic mechanism. Mg(2+) is bound by residues Asp162, Glu191, and Asp214. The Proton acceptor role is filled by Lys236.

The protein belongs to the mandelate racemase/muconate lactonizing enzyme family. MenC type 1 subfamily. A divalent metal cation is required as a cofactor.

It carries out the reaction (1R,6R)-6-hydroxy-2-succinyl-cyclohexa-2,4-diene-1-carboxylate = 2-succinylbenzoate + H2O. It participates in quinol/quinone metabolism; 1,4-dihydroxy-2-naphthoate biosynthesis; 1,4-dihydroxy-2-naphthoate from chorismate: step 4/7. It functions in the pathway quinol/quinone metabolism; menaquinone biosynthesis. In terms of biological role, converts 2-succinyl-6-hydroxy-2,4-cyclohexadiene-1-carboxylate (SHCHC) to 2-succinylbenzoate (OSB). This Yersinia pestis bv. Antiqua (strain Antiqua) protein is o-succinylbenzoate synthase.